Here is a 66-residue protein sequence, read N- to C-terminus: Beta-toxin ChFII.7 (66 aa).

Residues 1–66 (KEGYLVNHST…VWPLPKKTCN (66 aa)) enclose the LCN-type CS-alpha/beta domain. 4 disulfide bridges follow: Cys-12–Cys-65, Cys-16–Cys-41, Cys-25–Cys-46, and Cys-29–Cys-48. Asn-66 is subject to Asparagine amide.

As to expression, expressed by the venom gland.

It is found in the secreted. In terms of biological role, beta toxins bind voltage independently at site-4 of sodium channels (Nav) and shift the activation voltage toward more negative potentials, thereby affecting sodium channel activation CC and promoting spontaneous and repetitive firing. The chain is Beta-toxin ChFII.7 from Centruroides hirsutipalpus (Scorpion).